Consider the following 183-residue polypeptide: Thioredoxin/glutathione peroxidase BtuE (183 aa).

The active site involves Cys37.

This sequence belongs to the glutathione peroxidase family. BtuE subfamily.

Its subcellular location is the periplasm. It carries out the reaction 2 glutathione + H2O2 = glutathione disulfide + 2 H2O. The catalysed reaction is a hydroperoxide + [thioredoxin]-dithiol = an alcohol + [thioredoxin]-disulfide + H2O. In terms of biological role, non-specific peroxidase that can use thioredoxin or glutathione as a reducing agent. In vitro, utilizes preferentially thioredoxin A to decompose hydrogen peroxide as well as cumene-, tert-butyl-, and linoleic acid hydroperoxides, suggesting that it may have one or more organic hydroperoxide as its physiological substrate. This is Thioredoxin/glutathione peroxidase BtuE from Escherichia coli (strain K12).